The following is an 846-amino-acid chain: Protein kintoun (846 aa).

4 disordered regions span residues 216-240 (TAEEQEPHPLAHMFPTKPPAPGKPE), 372-405 (LRHFSREDSGVELHSNSESPVEEDPDGELSDSKA), 574-631 (QALK…ESAC), and 762-846 (KKNQ…EMDD). The span at 372 to 382 (LRHFSREDSGV) shows a compositional bias: basic and acidic residues. Residue S380 is modified to Phosphoserine. A compositionally biased stretch (acidic residues) spans 391-400 (PVEEDPDGEL). A compositionally biased stretch (basic and acidic residues) spans 583-603 (GTKEEEEKGNQDQEPESDKQH). Composition is skewed to basic residues over residues 611–622 (KAGKKQRKRNKK) and 762–776 (KKNQKRRDLKLRAQQ). Residue S780 is modified to Phosphoserine. Polar residues predominate over residues 795–809 (LKQQENQSRNCNKPN).

This sequence belongs to the PIH1 family. Kintoun subfamily. As to quaternary structure, interacts with Pp1alpha-96A, Pp1-87B, Pp1-13C and flw.

It localises to the cytoplasm. In terms of biological role, required for cytoplasmic pre-assembly of axonemal dyneins, thereby playing a central role in motility in cilia and flagella. Involved in pre-assembly of dynein arm complexes in the cytoplasm before intraflagellar transport loads them for the ciliary compartment. The polypeptide is Protein kintoun (Drosophila yakuba (Fruit fly)).